The sequence spans 737 residues: Elongation factor 2 (737 aa).

In terms of domain architecture, tr-type G spans Thr-18–Arg-262. GTP contacts are provided by residues Ala-27–Thr-34, Asp-93–His-97, and Asn-147–Asp-150. A Diphthamide modification is found at His-604.

The protein belongs to the TRAFAC class translation factor GTPase superfamily. Classic translation factor GTPase family. EF-G/EF-2 subfamily.

The protein resides in the cytoplasm. Functionally, catalyzes the GTP-dependent ribosomal translocation step during translation elongation. During this step, the ribosome changes from the pre-translocational (PRE) to the post-translocational (POST) state as the newly formed A-site-bound peptidyl-tRNA and P-site-bound deacylated tRNA move to the P and E sites, respectively. Catalyzes the coordinated movement of the two tRNA molecules, the mRNA and conformational changes in the ribosome. In Sulfurisphaera tokodaii (strain DSM 16993 / JCM 10545 / NBRC 100140 / 7) (Sulfolobus tokodaii), this protein is Elongation factor 2 (fusA).